The chain runs to 123 residues: Large ribosomal subunit protein uL14 (123 aa).

It belongs to the universal ribosomal protein uL14 family. Part of the 50S ribosomal subunit. Forms a cluster with proteins L3 and L19. In the 70S ribosome, L14 and L19 interact and together make contacts with the 16S rRNA in bridges B5 and B8.

Its function is as follows. Binds to 23S rRNA. Forms part of two intersubunit bridges in the 70S ribosome. This is Large ribosomal subunit protein uL14 from Corynebacterium urealyticum (strain ATCC 43042 / DSM 7109).